Here is a 419-residue protein sequence, read N- to C-terminus: 4-hydroxyphenylpyruvate dioxygenase (419 aa).

VOC domains follow at residues 41–187 (GYHH…FIQR) and 218–376 (AIDH…LFTK). The Fe cation site is built by H221, H304, and E387.

It belongs to the 4HPPD family. The cofactor is Fe cation.

The catalysed reaction is 3-(4-hydroxyphenyl)pyruvate + O2 = homogentisate + CO2. Its pathway is amino-acid degradation; L-phenylalanine degradation; acetoacetate and fumarate from L-phenylalanine: step 3/6. This is 4-hydroxyphenylpyruvate dioxygenase (HPPD) from Zymoseptoria tritici (Speckled leaf blotch fungus).